Here is a 261-residue protein sequence, read N- to C-terminus: CD40 ligand (261 aa).

At 1–22 (MVETYHQPAPRSAATGLPVSMK) the chain is on the cytoplasmic side. Residues 23–43 (IFMYLLTVFLITQMIGSALFA) traverse the membrane as a helical; Signal-anchor for type II membrane protein segment. The Extracellular segment spans residues 44 to 261 (VYLHRRLDKI…GFTSFGLLKL (218 aa)). One can recognise a THD domain in the interval 122-261 (IAAHVISEAS…GFTSFGLLKL (140 aa)). Residues Cys-178 and Cys-218 are joined by a disulfide bond. Asn-240 carries an N-linked (GlcNAc...) asparagine glycan.

It belongs to the tumor necrosis factor family. Homotrimer. Interacts with CD28. CD40 ligand, soluble form: Exists as either a monomer or a homotrimer. Forms a ternary complex between CD40 and integrins for CD40-CD40LG signaling. Post-translationally, the soluble form derives from the membrane form by proteolytic processing.

It localises to the cell membrane. The protein resides in the cell surface. It is found in the secreted. Cytokine that acts as a ligand to CD40/TNFRSF5. Costimulates T-cell proliferation and cytokine production. Its cross-linking on T-cells generates a costimulatory signal which enhances the production of IL4 and IL10 in conjunction with the TCR/CD3 ligation and CD28 costimulation. Induces the activation of NF-kappa-B. Induces the activation of kinases MAPK8 and PAK2 in T-cells. Mediates B-cell proliferation in the absence of co-stimulus as well as IgE production in the presence of IL4. Involved in immunoglobulin class switching. Its function is as follows. Acts as a ligand for integrins, specifically ITGA5:ITGB1 and ITGAV:ITGB3; both integrins and the CD40 receptor are required for activation of CD40-CD40LG signaling, which have cell-type dependent effects, such as B-cell activation, NF-kappa-B signaling and anti-apoptotic signaling. This Aotus trivirgatus (Three-striped night monkey) protein is CD40 ligand (CD40LG).